Here is a 160-residue protein sequence, read N- to C-terminus: Cytochrome b6-f complex subunit 4 (160 aa).

The next 3 helical transmembrane spans lie at 36 to 56, 95 to 115, and 131 to 151; these read LLYM…GLAV, LLGI…PFIE, and AVFL…ALPI.

This sequence belongs to the cytochrome b family. PetD subfamily. The 4 large subunits of the cytochrome b6-f complex are cytochrome b6, subunit IV (17 kDa polypeptide, PetD), cytochrome f and the Rieske protein, while the 4 small subunits are PetG, PetL, PetM and PetN. The complex functions as a dimer.

It localises to the cellular thylakoid membrane. In terms of biological role, component of the cytochrome b6-f complex, which mediates electron transfer between photosystem II (PSII) and photosystem I (PSI), cyclic electron flow around PSI, and state transitions. In Synechococcus elongatus (strain ATCC 33912 / PCC 7942 / FACHB-805) (Anacystis nidulans R2), this protein is Cytochrome b6-f complex subunit 4.